The following is a 244-amino-acid chain: Uridylate kinase (244 aa).

Position 18 to 21 (18 to 21 (KVSG)) interacts with ATP. Glycine 60 provides a ligand contact to UMP. The ATP site is built by glycine 61 and arginine 65. UMP is bound by residues aspartate 80 and 141–148 (TGNPFCTT). Residues threonine 168, glutamine 169, tyrosine 174, and aspartate 177 each coordinate ATP.

The protein belongs to the UMP kinase family. In terms of assembly, homohexamer.

The protein resides in the cytoplasm. It carries out the reaction UMP + ATP = UDP + ADP. It participates in pyrimidine metabolism; CTP biosynthesis via de novo pathway; UDP from UMP (UMPK route): step 1/1. Its activity is regulated as follows. Inhibited by UTP. Functionally, catalyzes the reversible phosphorylation of UMP to UDP. The protein is Uridylate kinase of Rickettsia typhi (strain ATCC VR-144 / Wilmington).